A 485-amino-acid polypeptide reads, in one-letter code: MSVPLLKIGVVLSTMAMITNWMSQTLPSLVGLNTTKLTAASGGTLDRSTGVLPTNPEESWQVYSSAQDSEGRCICTVVAPQQTMCSRDARTKQLRQLLEKVQNMSQSIEVLDRRTQRDLQYVEKMENQMRGLESKFKQVEESHKQHLARQFKAIKAKMEELRPLIPVLEEYKADAKLVLQFKEEVQNLTSVLNELQEEIGAYDYEELQNRVSNLEERLRACMQKLACGKLTGISDPITIKTSGSRFGSWMTDPLAPEGENKVWYMDSYHNNRFVREYKSMADFMNTDNFTSHRLPHPWSGTGQVVYNGSIYFNKYQSHIIIRFDLKTETILKTRSLDYAGYNNMYHYAWGGHSDIDLMVDENGLWAVYATNQNAGNIVISKLDPNTLQSLQTWNTSYPKRSAGEAFIICGTLYVTNGYSGGTKVHYAYQTNASTYEYIDIPFQNKYSHISMLDYNPKDRALYAWNNGHQILYNVTLFHVIRSDEL.

The first 16 residues, 1–16 (MSVPLLKIGVVLSTMA), serve as a signal peptide directing secretion. 8 N-linked (GlcNAc...) asparagine glycosylation sites follow: asparagine 33, asparagine 103, asparagine 187, asparagine 288, asparagine 307, asparagine 394, asparagine 431, and asparagine 473. The stretch at 87–225 (RDARTKQLRQ…ERLRACMQKL (139 aa)) forms a coiled coil. Residues 226–478 (ACGKLTGISD…QILYNVTLFH (253 aa)) enclose the Olfactomedin-like domain. Cysteine 227 and cysteine 409 form a disulfide bridge.

In terms of assembly, homotetramer; disulfide-linked. Dimer of dimers, giving rise to a V-shaped homotretramer. Component of the AMPAR complex. Post-translationally, glycosylated.

It is found in the secreted. It localises to the synapse. The protein resides in the endoplasmic reticulum. Its subcellular location is the cell projection. The protein localises to the axon. It is found in the perikaryon. Its function is as follows. Contributes to the regulation of axonal growth. May play an important role in regulating the production of neural crest cells by the neural tube. This chain is Noelin (OLFM1), found in Gallus gallus (Chicken).